Consider the following 302-residue polypeptide: MTAALHTSALTSLPLLARGKVRDNYAVGQDRLLMVASDRLSAFDVILGEPIPGKGALLTQMALFWFAKLGHLCPNHLTGEAPESVVTAAELPQVTGRSMLVKRLKPLPVEAVVRGYLAGSGWKEYQESQSVCGVPLPAGLKNAGKLPEPIFTPAAKAEVGEHDENISYEQVEKVVGPELAAQIKKISIEIYKTAAAFALTKGIIIADTKFEFGLDENGTLTLMDEVLTPDSSRYWPIEGYEAAYAAGLNPPSYDKQFVRDWLEAVRINGKPWDKTPPSPQLPPDVVAKTAAKYQEALTRLAG.

It belongs to the SAICAR synthetase family.

It catalyses the reaction 5-amino-1-(5-phospho-D-ribosyl)imidazole-4-carboxylate + L-aspartate + ATP = (2S)-2-[5-amino-1-(5-phospho-beta-D-ribosyl)imidazole-4-carboxamido]succinate + ADP + phosphate + 2 H(+). It functions in the pathway purine metabolism; IMP biosynthesis via de novo pathway; 5-amino-1-(5-phospho-D-ribosyl)imidazole-4-carboxamide from 5-amino-1-(5-phospho-D-ribosyl)imidazole-4-carboxylate: step 1/2. The sequence is that of Phosphoribosylaminoimidazole-succinocarboxamide synthase from Polaromonas sp. (strain JS666 / ATCC BAA-500).